The chain runs to 885 residues: Dual serine/threonine and tyrosine protein kinase (885 aa).

The region spanning 614–868 (PKLGRELGRG…PLLGIVQPGL (255 aa)) is the Protein kinase domain. Residues 620 to 628 (LGRGQYGVV) and K643 contribute to the ATP site. Catalysis depends on D739, which acts as the Proton acceptor.

The protein belongs to the protein kinase superfamily. Ser/Thr protein kinase family.

The protein localises to the cytoplasm. It is found in the cell membrane. Its subcellular location is the apical cell membrane. It localises to the basolateral cell membrane. The protein resides in the cell junction. It catalyses the reaction L-seryl-[protein] + ATP = O-phospho-L-seryl-[protein] + ADP + H(+). The catalysed reaction is L-threonyl-[protein] + ATP = O-phospho-L-threonyl-[protein] + ADP + H(+). It carries out the reaction L-tyrosyl-[protein] + ATP = O-phospho-L-tyrosyl-[protein] + ADP + H(+). Its function is as follows. May act as a positive regulator of ERK phosphorylation downstream of fibroblast growth factor-receptor activation. May induce both caspase-dependent apoptosis and caspase-independent cell death. Plays a role in the embryonic development. In Danio rerio (Zebrafish), this protein is Dual serine/threonine and tyrosine protein kinase (dstyk).